Consider the following 330-residue polypeptide: Succinylglutamate desuccinylase (330 aa).

Zn(2+)-binding residues include His53, Glu56, and His147. The active site involves Glu210.

The protein belongs to the AspA/AstE family. Succinylglutamate desuccinylase subfamily. Zn(2+) serves as cofactor.

The enzyme catalyses N-succinyl-L-glutamate + H2O = L-glutamate + succinate. It functions in the pathway amino-acid degradation; L-arginine degradation via AST pathway; L-glutamate and succinate from L-arginine: step 5/5. Its function is as follows. Transforms N(2)-succinylglutamate into succinate and glutamate. This chain is Succinylglutamate desuccinylase, found in Yersinia enterocolitica serotype O:8 / biotype 1B (strain NCTC 13174 / 8081).